The chain runs to 121 residues: Large ribosomal subunit protein bL12 (121 aa).

This sequence belongs to the bacterial ribosomal protein bL12 family. As to quaternary structure, homodimer. Part of the ribosomal stalk of the 50S ribosomal subunit. Forms a multimeric L10(L12)X complex, where L10 forms an elongated spine to which 2 to 4 L12 dimers bind in a sequential fashion. Binds GTP-bound translation factors.

Forms part of the ribosomal stalk which helps the ribosome interact with GTP-bound translation factors. Is thus essential for accurate translation. The sequence is that of Large ribosomal subunit protein bL12 from Alkaliphilus oremlandii (strain OhILAs) (Clostridium oremlandii (strain OhILAs)).